Consider the following 161-residue polypeptide: Large ribosomal subunit protein uL11 (161 aa).

The protein belongs to the universal ribosomal protein uL11 family. Part of the ribosomal stalk of the 50S ribosomal subunit. Interacts with L10 and the large rRNA to form the base of the stalk. L10 forms an elongated spine to which L12 dimers bind in a sequential fashion forming a multimeric L10(L12)X complex.

Forms part of the ribosomal stalk which helps the ribosome interact with GTP-bound translation factors. In Methanosarcina acetivorans (strain ATCC 35395 / DSM 2834 / JCM 12185 / C2A), this protein is Large ribosomal subunit protein uL11.